The chain runs to 342 residues: Muscleblind-like protein 3 (342 aa).

4 consecutive C3H1-type zinc fingers follow at residues 14-42, 48-74, 174-202, and 210-236; these read WLTL…HPPR, NGRV…HPPP, TDRL…HPTD, and DNSV…HPPP. Residues 316–326 are compositionally biased toward low complexity; the sequence is PSTVSTATPPA. Residues 316–342 are disordered; the sequence is PSTVSTATPPASNVPYVPTTTGNQLKY. The span at 333-342 shows a compositional bias: polar residues; that stretch reads PTTTGNQLKY.

This sequence belongs to the muscleblind family.

It localises to the nucleus. Its subcellular location is the cytoplasm. Its function is as follows. Mediates pre-mRNA alternative splicing regulation. Acts either as activator or repressor of splicing on specific pre-mRNA targets. Inhibits cardiac troponin-T (TNNT2) pre-mRNA exon inclusion but induces insulin receptor (IR) pre-mRNA exon inclusion in muscle. Antagonizes the alternative splicing activity pattern of CELF proteins. Could inhibit terminal muscle differentiation, acting at approximately the time of myogenin induction. The polypeptide is Muscleblind-like protein 3 (Mbnl3) (Mus musculus (Mouse)).